Consider the following 406-residue polypeptide: Imidazolonepropionase (406 aa).

His-72 and His-74 together coordinate Fe(3+). Zn(2+) is bound by residues His-72 and His-74. Arg-81, Tyr-144, and His-177 together coordinate 4-imidazolone-5-propanoate. Tyr-144 is a binding site for N-formimidoyl-L-glutamate. His-242 is a binding site for Fe(3+). His-242 contacts Zn(2+). Gln-245 is a 4-imidazolone-5-propanoate binding site. Asp-317 serves as a coordination point for Fe(3+). Asp-317 provides a ligand contact to Zn(2+). N-formimidoyl-L-glutamate is bound by residues Asn-319 and Gly-321. Thr-322 contacts 4-imidazolone-5-propanoate.

It belongs to the metallo-dependent hydrolases superfamily. HutI family. It depends on Zn(2+) as a cofactor. Requires Fe(3+) as cofactor.

Its subcellular location is the cytoplasm. The enzyme catalyses 4-imidazolone-5-propanoate + H2O = N-formimidoyl-L-glutamate. Its pathway is amino-acid degradation; L-histidine degradation into L-glutamate; N-formimidoyl-L-glutamate from L-histidine: step 3/3. Functionally, catalyzes the hydrolytic cleavage of the carbon-nitrogen bond in imidazolone-5-propanoate to yield N-formimidoyl-L-glutamate. It is the third step in the universal histidine degradation pathway. The protein is Imidazolonepropionase of Yersinia enterocolitica serotype O:8 / biotype 1B (strain NCTC 13174 / 8081).